A 131-amino-acid polypeptide reads, in one-letter code: Ribosome-binding factor A (131 aa).

The protein belongs to the RbfA family. Monomer. Binds 30S ribosomal subunits, but not 50S ribosomal subunits or 70S ribosomes.

The protein localises to the cytoplasm. Functionally, one of several proteins that assist in the late maturation steps of the functional core of the 30S ribosomal subunit. Associates with free 30S ribosomal subunits (but not with 30S subunits that are part of 70S ribosomes or polysomes). Required for efficient processing of 16S rRNA. May interact with the 5'-terminal helix region of 16S rRNA. This Mannheimia succiniciproducens (strain KCTC 0769BP / MBEL55E) protein is Ribosome-binding factor A.